A 165-amino-acid polypeptide reads, in one-letter code: NADPH-dependent 7-cyano-7-deazaguanine reductase (165 aa).

Residue Cys56 is the Thioimide intermediate of the active site. Catalysis depends on Asp63, which acts as the Proton donor. Substrate contacts are provided by residues 78–80 (VES) and 97–98 (HE).

It belongs to the GTP cyclohydrolase I family. QueF type 1 subfamily.

Its subcellular location is the cytoplasm. It catalyses the reaction 7-aminomethyl-7-carbaguanine + 2 NADP(+) = 7-cyano-7-deazaguanine + 2 NADPH + 3 H(+). It participates in tRNA modification; tRNA-queuosine biosynthesis. Its function is as follows. Catalyzes the NADPH-dependent reduction of 7-cyano-7-deazaguanine (preQ0) to 7-aminomethyl-7-deazaguanine (preQ1). This is NADPH-dependent 7-cyano-7-deazaguanine reductase from Bacillus licheniformis (strain ATCC 14580 / DSM 13 / JCM 2505 / CCUG 7422 / NBRC 12200 / NCIMB 9375 / NCTC 10341 / NRRL NRS-1264 / Gibson 46).